Consider the following 171-residue polypeptide: MAVCARLLEWIFFFYFFSHIPITLLVDLQAVLPPSLYPQELLDLMKWYTVAFKDHLMANPPPWFKSFVYCEAILQLPFFPVAAYAFFKGGCKWIRIPAIVYSAHVATTVIAIIGHILFGEFPKSDVIAPLTQKDRLTLVSIYAPYLLVPVLLLLTMLFSPRYRQEEKRKRK.

At 1–6 (MAVCAR) the chain is on the cytoplasmic side. Residues 7 to 27 (LLEWIFFFYFFSHIPITLLVD) form a helical membrane-spanning segment. Residues 8–153 (LEWIFFFYFF…PYLLVPVLLL (146 aa)) enclose the EXPERA domain. Topologically, residues 28–66 (LQAVLPPSLYPQELLDLMKWYTVAFKDHLMANPPPWFKS) are lumenal. Residues 67–87 (FVYCEAILQLPFFPVAAYAFF) traverse the membrane as a helical segment. 2 residues coordinate cholesterol: I73 and Q75. Residues 88–97 (KGGCKWIRIP) lie on the Cytoplasmic side of the membrane. Residues 98–118 (AIVYSAHVATTVIAIIGHILF) traverse the membrane as a helical segment. The Lumenal portion of the chain corresponds to 119–137 (GEFPKSDVIAPLTQKDRLT). The helical transmembrane segment at 138-158 (LVSIYAPYLLVPVLLLLTMLF) threads the bilayer. Over 159 to 171 (SPRYRQEEKRKRK) the chain is Cytoplasmic. The ER retention motif motif lies at 167–171 (KRKRK).

It belongs to the TMEM97/sigma-2 receptor family. In terms of assembly, homodimer.

The protein resides in the rough endoplasmic reticulum membrane. The protein localises to the nucleus membrane. In terms of biological role, sigma-2 receptor which contributes to ameliorate dysfunctional cellular processes and slow degenerative progression by regulating cell functions including cholesterol biosynthesis/trafficking, membrane trafficking, autophagy, lipid membrane-bound protein trafficking, and receptor stabilization at the cell surface. Forms a ternary complex with PGRMC1 receptor and low density lipoprotein receptor/LDLR at the plasma membrane, which increases LDLR-mediated LDL cholesterol internalization. Decreases lysosomal sterol transporter NPC1 availability to the cell, probably through NPC1-binding, hence controlling lipid transport, including cholesterol and LBPA, outside of late endosome/lysosome. Binds regio- and stereoselective ligand 20(S)-hydroxycholesterol (20(S)-OHC), thereby linking OHC binding to cholesterol homeostasis. Also able to bind cholesterol. Binds histatin 1 (Hst 1)/HN1 salivary peptide at the ER membrane, which is critical for increasing mitochondria-ER contacts and stimulating Hst1 wound healing properties. May alter the activity of some cytochrome P450 proteins. Although shows homologies with sterol isomerases (EXPERA domain), not able to catalyze sterol isomerization. However, may act as sensors of these molecules. Acts as a quality control factor in the ER, promoting the proteolytic degradation of nonproductive and extramitochondrial precursor proteins in the ER membrane thus removing them from the ER surface. In Xenopus tropicalis (Western clawed frog), this protein is Sigma intracellular receptor 2 (tmem97).